Consider the following 73-residue polypeptide: Putative defensin-like protein 33 (73 aa).

The first 25 residues, 1–25 (MASNKVSFIFILFLCVLSTAEFGEA), serve as a signal peptide directing secretion. 3 disulfides stabilise this stretch: C33–C59, C45–C68, and C49–C70.

Belongs to the DEFL family.

Its subcellular location is the secreted. The protein is Putative defensin-like protein 33 of Arabidopsis thaliana (Mouse-ear cress).